Reading from the N-terminus, the 183-residue chain is Ribosome-recycling factor (183 aa).

This sequence belongs to the RRF family.

The protein localises to the cytoplasm. Responsible for the release of ribosomes from messenger RNA at the termination of protein biosynthesis. May increase the efficiency of translation by recycling ribosomes from one round of translation to another. The polypeptide is Ribosome-recycling factor (Ureaplasma urealyticum serovar 10 (strain ATCC 33699 / Western)).